Reading from the N-terminus, the 511-residue chain is Inactive cytochrome P450 monooxygenase cloA (511 aa).

The helical transmembrane segment at 17–37 threads the bilayer; that stretch reads ILLTAGLCVPCALVIHGIYNL. 2 N-linked (GlcNAc...) asparagine glycosylation sites follow: asparagine 81 and asparagine 344. Heme is bound at residue cysteine 450.

This sequence belongs to the cytochrome P450 family. Heme serves as cofactor.

The protein resides in the membrane. Its function is as follows. Inactive cytochrome P450 monooxygenase; part of the gene cluster that mediates the biosynthesis of fungal ergot alkaloid. DmaW catalyzes the first step of ergot alkaloid biosynthesis by condensing dimethylallyl diphosphate (DMAP) and tryptophan to form 4-dimethylallyl-L-tryptophan. The second step is catalyzed by the methyltransferase easF that methylates 4-dimethylallyl-L-tryptophan in the presence of S-adenosyl-L-methionine, resulting in the formation of 4-dimethylallyl-L-abrine. The catalase easC and the FAD-dependent oxidoreductase easE then transform 4-dimethylallyl-L-abrine to chanoclavine-I which is further oxidized by easD in the presence of NAD(+), resulting in the formation of chanoclavine-I aldehyde. Agroclavine dehydrogenase easG then mediates the conversion of chanoclavine-I aldehyde to agroclavine via a non-enzymatic adduct reaction: the substrate is an iminium intermediate that is formed spontaneously from chanoclavine-I aldehyde in the presence of glutathione. Further conversion of agroclavine to paspalic acid is a two-step process involving oxidation of agroclavine to elymoclavine and of elymoclavine to paspalic acid, the second step being performed by the elymoclavine oxidase cloA. However, cloA does not encode a functional enzyme indicating that C.fusiformis terminates its ergot alkaloid pathway at elymoclavine. The chain is Inactive cytochrome P450 monooxygenase cloA from Claviceps fusiformis (Ergot fungus).